The chain runs to 292 residues: Sulfofructosephosphate aldolase (292 aa).

Catalysis depends on Lys193, which acts as the Schiff-base intermediate with substrate.

It belongs to the aldolase LacD family. In terms of assembly, homotetramer.

The catalysed reaction is 6-deoxy-6-sulfo-D-fructose 1-phosphate = (2S)-3-sulfolactaldehyde + dihydroxyacetone phosphate. In terms of biological role, cleaves 6-deoxy-6-sulfo-D-fructose 1-phosphate (SFP) to form dihydroxyacetone phosphate (DHAP) and 3-sulfolactaldehyde (SLA). This Escherichia coli (strain K12) protein is Sulfofructosephosphate aldolase (yihT).